The primary structure comprises 428 residues: Immunoglobulin superfamily containing leucine-rich repeat protein (428 aa).

The N-terminal stretch at 1–18 is a signal peptide; the sequence is MQELHLLWWALLLGLAQA. The LRRNT domain maps to 19–50; that stretch reads CPEPCDCGEKYGFQIADCAYRDLESVPPGFPA. Asn-51 is a glycosylation site (N-linked (GlcNAc...) asparagine). LRR repeat units follow at residues 51-72, 75-96, 99-122, 123-144, and 147-168; these read NVTT…AFRE, LLQS…ALAS, HLKS…HNLS, ALQL…AFRS, and ALRS…TFTP. Residues 180 to 231 enclose the LRRCT domain; the sequence is NPFDCTCGIVWLKTWALTTAVSIPEQDNIACTSPHVLKGTPLSRLPPLPCSA. The Ig-like domain occupies 232-343; it reads PSVQLSYQPS…GSAESSVDVA (112 aa). Cys-257 and Cys-327 are joined by a disulfide. The N-linked (GlcNAc...) asparagine glycan is linked to Asn-309.

In terms of tissue distribution, expressed in various tissues including retina, heart, skeletal muscle, prostate, ovary, small intestine, thyroid, adrenal cortex, testis, stomach and spinal cord.

It localises to the secreted. This is Immunoglobulin superfamily containing leucine-rich repeat protein (ISLR) from Homo sapiens (Human).